A 384-amino-acid chain; its full sequence is Deoxyguanosinetriphosphate triphosphohydrolase-like protein (384 aa).

Positions 62-198 (RLTHSLEVST…AALADDISYI (137 aa)) constitute an HD domain.

This sequence belongs to the dGTPase family. Type 2 subfamily.

The polypeptide is Deoxyguanosinetriphosphate triphosphohydrolase-like protein (Rickettsia conorii (strain ATCC VR-613 / Malish 7)).